The sequence spans 280 residues: Octanoyl-[GcvH]:protein N-octanoyltransferase (280 aa).

The 206-residue stretch at 40 to 245 folds into the BPL/LPL catalytic domain; sequence QERGAVLRAW…VLSTVSLLQN (206 aa). The active-site Acyl-thioester intermediate is the C144.

Belongs to the octanoyltransferase LipL family.

The catalysed reaction is N(6)-octanoyl-L-lysyl-[glycine-cleavage complex H protein] + L-lysyl-[lipoyl-carrier protein] = N(6)-octanoyl-L-lysyl-[lipoyl-carrier protein] + L-lysyl-[glycine-cleavage complex H protein]. The protein operates within protein modification; protein lipoylation via endogenous pathway; protein N(6)-(lipoyl)lysine from octanoyl-[acyl-carrier-protein]. Catalyzes the amidotransfer (transamidation) of the octanoyl moiety from octanoyl-GcvH to the lipoyl domain of the E2 subunit of lipoate-dependent enzymes. The chain is Octanoyl-[GcvH]:protein N-octanoyltransferase from Exiguobacterium sp. (strain ATCC BAA-1283 / AT1b).